We begin with the raw amino-acid sequence, 608 residues long: MLLDEIKRMSYDELKRLAEDIRKKITEVVLKNGGHLASNLGTIELTLALYRVFDPREDAIIWDTGHQAYTHKILTGRDELFHTIRTFGGLSGFVTRRESPLDWFGTGHAGTSIAAGLGFEKAFELLGEKRHVVVVIGDGALTSGMALEALNQLKNINSKMKIILNDNGMSISPNVGGLAYHLSKLRTSPIYLKGKKVLKEVLEKTEIGFEVEEEMKYLRDSLKGMIQGTNFFESLGLKYFGPFDGHNIELLEKVFKRIRDYDYPSVIHVVTKKGKGFTAAEEDPTKYHSAPPSEKPKMLSYSELLGYTLSRIAREDKKIVAITAAMADGTGLSIFQKEHPDRFFDLGITEQTCVTFGAALGLHGMKPVVAIYSTFLQRAYDQIVHDVALQNAPVLFAIDKSGVVGEDGPTHHGLFDINYLLPVPNMKIISPSSPEEFVSSLYTILKNLDGPVAIRYPKESFYGEVESILENMKKIDLGWKILRRGKEAAIIATGTILNEVLKIPLDVTVVNALTVKPLDTAVLKEIARDHDIIITVEEAMRIGGFGSFVAQRLQEMGWQGKIVNVGVEDLFVPHGGRKELLSTLGLDSEGLTKTVLTYIKARSREGKV.

Residues His66 and 107 to 109 each bind thiamine diphosphate; that span reads GHA. Asp138 is a binding site for Mg(2+). Residues 139-140, Asn167, Phe277, and Glu350 each bind thiamine diphosphate; that span reads GA. Asn167 lines the Mg(2+) pocket.

The protein belongs to the transketolase family. DXPS subfamily. Homodimer. Requires Mg(2+) as cofactor. Thiamine diphosphate serves as cofactor.

The catalysed reaction is D-glyceraldehyde 3-phosphate + pyruvate + H(+) = 1-deoxy-D-xylulose 5-phosphate + CO2. Its pathway is metabolic intermediate biosynthesis; 1-deoxy-D-xylulose 5-phosphate biosynthesis; 1-deoxy-D-xylulose 5-phosphate from D-glyceraldehyde 3-phosphate and pyruvate: step 1/1. In terms of biological role, catalyzes the acyloin condensation reaction between C atoms 2 and 3 of pyruvate and glyceraldehyde 3-phosphate to yield 1-deoxy-D-xylulose-5-phosphate (DXP). The polypeptide is 1-deoxy-D-xylulose-5-phosphate synthase (Thermotoga petrophila (strain ATCC BAA-488 / DSM 13995 / JCM 10881 / RKU-1)).